Reading from the N-terminus, the 1671-residue chain is Hybrid signal transduction protein dokA (1671 aa).

The span at 1–10 (MSSPHIELHS) shows a compositional bias: basic and acidic residues. 6 disordered regions span residues 1–27 (MSSP…ELTG), 42–89 (DDLN…DKND), 126–241 (QQQQ…RRSS), 365–451 (YSNN…NNEE), 579–603 (HNHN…SPFI), and 629–651 (SNSS…SSNA). The segment covering 11-27 (QRTLSPQPSSNNFELTG) has biased composition (polar residues). 2 stretches are compositionally biased toward low complexity: residues 45 to 83 (NNNN…NNNN) and 126 to 167 (QQQQ…QQQE). Positions 168–179 (QEQEQEQEQEQE) are enriched in acidic residues. Residues 367–449 (NNNNNTNTNN…NNNNNNNNNN (83 aa)) are compositionally biased toward low complexity. Over residues 591-600 (TTQRASSTDS) the composition is skewed to polar residues. One can recognise a Histidine kinase domain in the interval 1050–1276 (NISHELRTPC…TFWFAIKVSI (227 aa)). A Response regulatory domain is found at 1519–1633 (YILVAEDNDI…RLQKTLSDWI (115 aa)).

Post-translationally, under osmotic stress conditions, this protein undergoes phosphorylation at a serine residue in the kinase core, which is not due to an autophosphorylation of dokA. This is in contrast to the classic two-component paradigm, which predicts only histidine and aspartate phosphorylation.

Its function is as follows. Part of the osmoregulatory pathway which leads to the increase of intracellular cAMP concentration in response to hyperosmotic stress. Thought to negatively regulate the rdeA-regA pathway by acting as a phosphatase towards the HPt protein rdeA. Has probably no histidine kinase activity. This Dictyostelium discoideum (Social amoeba) protein is Hybrid signal transduction protein dokA (dokA).